Reading from the N-terminus, the 1722-residue chain is Lymphocyte antigen 75 (1722 aa).

The first 27 residues, 1–27 (MRTGWATPRRPAGLLMLLFWFFDLAEP), serve as a signal peptide directing secretion. At 28–1666 (SGRAANDPFT…VVCKVPLGPD (1639 aa)) the chain is on the extracellular side. The Ricin B-type lectin domain maps to 33–156 (NDPFTIVHGN…ESLCDQPYHE (124 aa)). An N-linked (GlcNAc...) asparagine glycan is attached at asparagine 135. Positions 164–211 (SYGRPCEFPFLIDGTWHHDCILDEDHSGPWCATTLNYEYDRKWGICLK) constitute a Fibronectin type-II domain. Cystine bridges form between cysteine 169/cysteine 194, cysteine 183/cysteine 209, cysteine 247/cysteine 340, and cysteine 317/cysteine 332. In terms of domain architecture, C-type lectin 1 spans 225–341 (QFGSCYQFNT…CEAQLPYVCR (117 aa)). N-linked (GlcNAc...) asparagine glycans are attached at residues asparagine 345 and asparagine 377. C-type lectin domains lie at 368 to 486 (NNGF…YVCK), 493 to 625 (NDAS…ICKK), 652 to 778 (ASLS…IYLR), and 818 to 931 (IEGS…FICE). 2 cysteine pairs are disulfide-bonded: cysteine 389–cysteine 485 and cysteine 462–cysteine 477. Asparagine 529 carries N-linked (GlcNAc...) asparagine glycosylation. A disulfide bridge connects residues cysteine 597 and cysteine 614. 2 disulfides stabilise this stretch: cysteine 840/cysteine 930 and cysteine 904/cysteine 922. N-linked (GlcNAc...) asparagine glycosylation is found at asparagine 843 and asparagine 865. The residue at position 933 (tyrosine 933) is a Phosphotyrosine. 3 N-linked (GlcNAc...) asparagine glycosylation sites follow: asparagine 934, asparagine 1076, and asparagine 1103. Positions 958-1091 (FQNKCFLKIK…ERHFVSLCQK (134 aa)) constitute a C-type lectin 6 domain. Cysteines 1060 and 1080 form a disulfide. Positions 1110–1222 (YLNNLYKIIP…DNQPGAICYY (113 aa)) constitute a C-type lectin 7 domain. A disulfide bridge connects residues cysteine 1197 and cysteine 1211. N-linked (GlcNAc...) asparagine glycans are attached at residues asparagine 1225, asparagine 1320, and asparagine 1392. Residues 1251–1374 (FQNCCYNFII…VIEEAVYFHQ (124 aa)) enclose the C-type lectin 8 domain. C-type lectin domains lie at 1401–1513 (YEDG…ICYK) and 1542–1661 (YKGH…VCKV). Cysteine 1488 and cysteine 1502 are oxidised to a cystine. Residues asparagine 1593 and asparagine 1626 are each glycosylated (N-linked (GlcNAc...) asparagine). Cysteine 1635 and cysteine 1650 form a disulfide bridge. A helical membrane pass occupies residues 1667–1691 (YTAIAIIVATLSILVLMGGLIWFLF). Residues 1692–1722 (QRHRLHLAGFSSVRYAQGVNEDEIMLPSFHD) are Cytoplasmic-facing. A phosphoserine mark is found at serine 1703 and serine 1719.

N-glycosylated. In terms of tissue distribution, expressed in spleen, thymus, colon and peripheral blood lymphocytes. Detected in myeloid and B-lymphoid cell lines. Isoform 2 and isoform 3 are expressed in malignant Hodgkin lymphoma cells called Hodgkin and Reed-Sternberg (HRS) cells.

The protein resides in the membrane. Functionally, acts as an endocytic receptor to direct captured antigens from the extracellular space to a specialized antigen-processing compartment. Causes reduced proliferation of B-lymphocytes. This chain is Lymphocyte antigen 75 (LY75), found in Homo sapiens (Human).